We begin with the raw amino-acid sequence, 155 residues long: Molybdopterin synthase catalytic subunit (155 aa).

Substrate-binding positions include H109–R110, K125, and K132–E134.

It belongs to the MoaE family. MOCS2B subfamily. Heterotetramer; composed of 2 small (MOCS2A) and 2 large (MOCS2B) subunits.

The protein resides in the cytoplasm. Its subcellular location is the cytosol. The enzyme catalyses 2 [molybdopterin-synthase sulfur-carrier protein]-C-terminal-Gly-aminoethanethioate + cyclic pyranopterin phosphate + H2O = molybdopterin + 2 [molybdopterin-synthase sulfur-carrier protein]-C-terminal Gly-Gly + 2 H(+). Its pathway is cofactor biosynthesis; molybdopterin biosynthesis. Functionally, catalytic subunit of the molybdopterin synthase complex, a complex that catalyzes the conversion of precursor Z into molybdopterin. Acts by mediating the incorporation of 2 sulfur atoms from thiocarboxylated MOCS2A into precursor Z to generate a dithiolene group. The chain is Molybdopterin synthase catalytic subunit from Taeniopygia guttata (Zebra finch).